Here is a 222-residue protein sequence, read N- to C-terminus: Endonuclease V (222 aa).

2 residues coordinate Mg(2+): Asp-34 and Asp-102.

Belongs to the endonuclease V family. It depends on Mg(2+) as a cofactor.

It localises to the cytoplasm. The enzyme catalyses Endonucleolytic cleavage at apurinic or apyrimidinic sites to products with a 5'-phosphate.. In terms of biological role, DNA repair enzyme involved in the repair of deaminated bases. Selectively cleaves double-stranded DNA at the second phosphodiester bond 3' to a deoxyinosine leaving behind the intact lesion on the nicked DNA. The chain is Endonuclease V from Photorhabdus laumondii subsp. laumondii (strain DSM 15139 / CIP 105565 / TT01) (Photorhabdus luminescens subsp. laumondii).